Reading from the N-terminus, the 215-residue chain is Oligoribonuclease (215 aa).

The Exonuclease domain occupies 5 to 170; the sequence is LVWIDCEMTG…ADIHESIREL (166 aa). Residue Y127 is part of the active site. The interval 196–215 is disordered; sequence LDEGKDAPGPSDSASAPPTG. The segment covering 202 to 215 has biased composition (low complexity); that stretch reads APGPSDSASAPPTG.

Belongs to the oligoribonuclease family.

The protein resides in the cytoplasm. In terms of biological role, 3'-to-5' exoribonuclease specific for small oligoribonucleotides. The protein is Oligoribonuclease of Mycolicibacterium paratuberculosis (strain ATCC BAA-968 / K-10) (Mycobacterium paratuberculosis).